The primary structure comprises 88 residues: ATP synthase epsilon chain (88 aa).

The protein belongs to the ATPase epsilon chain family. In terms of assembly, F-type ATPases have 2 components, CF(1) - the catalytic core - and CF(0) - the membrane proton channel. CF(1) has five subunits: alpha(3), beta(3), gamma(1), delta(1), epsilon(1). CF(0) has three main subunits: a, b and c.

Its subcellular location is the cell inner membrane. Produces ATP from ADP in the presence of a proton gradient across the membrane. The protein is ATP synthase epsilon chain (atpC) of Chlorobaculum tepidum (strain ATCC 49652 / DSM 12025 / NBRC 103806 / TLS) (Chlorobium tepidum).